Here is a 154-residue protein sequence, read N- to C-terminus: Prefoldin subunit alpha (154 aa).

The tract at residues 119–154 is disordered; sequence EKAEVETEMEELEQQAQQMQQQQMQQMMQQQEQEDE. Over residues 132 to 154 the composition is skewed to low complexity; that stretch reads QQAQQMQQQQMQQMMQQQEQEDE.

The protein belongs to the prefoldin subunit alpha family. As to quaternary structure, heterohexamer of two alpha and four beta subunits.

It is found in the cytoplasm. Functionally, molecular chaperone capable of stabilizing a range of proteins. Seems to fulfill an ATP-independent, HSP70-like function in archaeal de novo protein folding. This chain is Prefoldin subunit alpha, found in Haloarcula marismortui (strain ATCC 43049 / DSM 3752 / JCM 8966 / VKM B-1809) (Halobacterium marismortui).